The following is a 381-amino-acid chain: Anhydro-N-acetylmuramic acid kinase (381 aa).

13–20 lines the ATP pocket; the sequence is GTSLDGID.

Belongs to the anhydro-N-acetylmuramic acid kinase family.

The enzyme catalyses 1,6-anhydro-N-acetyl-beta-muramate + ATP + H2O = N-acetyl-D-muramate 6-phosphate + ADP + H(+). Its pathway is amino-sugar metabolism; 1,6-anhydro-N-acetylmuramate degradation. The protein operates within cell wall biogenesis; peptidoglycan recycling. Catalyzes the specific phosphorylation of 1,6-anhydro-N-acetylmuramic acid (anhMurNAc) with the simultaneous cleavage of the 1,6-anhydro ring, generating MurNAc-6-P. Is required for the utilization of anhMurNAc either imported from the medium or derived from its own cell wall murein, and thus plays a role in cell wall recycling. This Francisella tularensis subsp. novicida (strain U112) protein is Anhydro-N-acetylmuramic acid kinase.